We begin with the raw amino-acid sequence, 452 residues long: uncharacterized protein (452 aa).

Residues 3 to 61 (KVKIGEKYEVDITSMGHEGEGVGRIDGIAVFVKGALKGERVIVEIEEVHKNYLKGYTVK) form the TRAM domain. Residues C74, C80, C83, and C160 each coordinate [4Fe-4S] cluster. Q284, Y313, E334, and D382 together coordinate S-adenosyl-L-methionine. C409 serves as the catalytic Nucleophile.

It belongs to the class I-like SAM-binding methyltransferase superfamily. RNA M5U methyltransferase family.

This is an uncharacterized protein from Caldanaerobacter subterraneus subsp. tengcongensis (strain DSM 15242 / JCM 11007 / NBRC 100824 / MB4) (Thermoanaerobacter tengcongensis).